The chain runs to 145 residues: Phospholipase A2, membrane associated (145 aa).

The N-terminal stretch at 1–20 (MKLLLLLLVVMASDLPQAHG) is a signal peptide. Intrachain disulfides connect cysteine 46–cysteine 138, cysteine 48–cysteine 64, cysteine 63–cysteine 118, cysteine 69–cysteine 145, cysteine 70–cysteine 111, cysteine 79–cysteine 104, and cysteine 97–cysteine 109. Ca(2+) contacts are provided by histidine 47, glycine 49, and glycine 51. Residue histidine 67 is part of the active site. Aspartate 68 is a binding site for Ca(2+). Aspartate 112 is an active-site residue.

This sequence belongs to the phospholipase A2 family. It depends on Ca(2+) as a cofactor. As to expression, alveolar macrophages, and at much lower levels in peripheral blood monocytes and peritoneal macrophages.

The protein resides in the secreted. It localises to the cell membrane. It is found in the mitochondrion outer membrane. The enzyme catalyses a 1,2-diacyl-sn-glycero-3-phosphoethanolamine + H2O = a 1-acyl-sn-glycero-3-phosphoethanolamine + a fatty acid + H(+). It catalyses the reaction 1-hexadecanoyl-2-(9Z-octadecenoyl)-sn-glycero-3-phosphoethanolamine + H2O = 1-hexadecanoyl-sn-glycero-3-phosphoethanolamine + (9Z)-octadecenoate + H(+). The catalysed reaction is 1-hexadecanoyl-2-(9Z,12Z-octadecadienoyl)-sn-glycero-3-phosphoethanolamine + H2O = 1-hexadecanoyl-sn-glycero-3-phosphoethanolamine + (9Z,12Z)-octadecadienoate + H(+). It carries out the reaction 1-hexadecanoyl-2-(5Z,8Z,11Z,14Z-eicosatetraenoyl)-sn-glycero-3-phosphoethanolamine + H2O = 1-hexadecanoyl-sn-glycero-3-phosphoethanolamine + (5Z,8Z,11Z,14Z)-eicosatetraenoate + H(+). The enzyme catalyses N-hexadecanoyl-1,2-di-(9Z-octadecenoyl)-sn-glycero-3-phosphoethanolamine + H2O = N-hexadecanoyl-1-(9Z-octadecenoyl)-sn-glycero-3-phosphoethanolamine + (9Z)-octadecenoate + H(+). It catalyses the reaction 1,2-dihexadecanoyl-sn-glycero-3-phospho-(1'-sn-glycerol) + H2O = 1-hexadecanoyl-sn-glycero-3-phospho-(1'-sn-glycerol) + hexadecanoate + H(+). The catalysed reaction is 1-hexadecanoyl-2-(9Z-octadecenoyl)-sn-glycero-3-phosphoglycerol + H2O = 1-hexadecanoyl-sn-glycero-3-phosphoglycerol + (9Z)-octadecenoate + H(+). It carries out the reaction 1-hexadecanoyl-2-(9Z-octadecenoyl)-sn-glycero-3-phospho-(1'-sn-glycerol) + H2O = 1-hexadecanoyl-sn-glycero-3-phospho-(1'-sn-glycerol) + (9Z)-octadecenoate + H(+). The enzyme catalyses a 1,2-diacyl-sn-glycero-3-phosphocholine + H2O = a 1-acyl-sn-glycero-3-phosphocholine + a fatty acid + H(+). It catalyses the reaction 1,2-dihexadecanoyl-sn-glycero-3-phosphocholine + H2O = 1-hexadecanoyl-sn-glycero-3-phosphocholine + hexadecanoate + H(+). The catalysed reaction is 1-hexadecanoyl-2-(9Z-octadecenoyl)-sn-glycero-3-phosphocholine + H2O = 1-hexadecanoyl-sn-glycero-3-phosphocholine + (9Z)-octadecenoate + H(+). It carries out the reaction 1-hexadecanoyl-2-(9Z,12Z-octadecadienoyl)-sn-glycero-3-phosphocholine + H2O = (9Z,12Z)-octadecadienoate + 1-hexadecanoyl-sn-glycero-3-phosphocholine + H(+). The enzyme catalyses 1-hexadecanoyl-2-(4Z,7Z,10Z,13Z,16Z,19Z-docosahexaenoyl)-sn-glycero-3-phosphocholine + H2O = (4Z,7Z,10Z,13Z,16Z,19Z)-docosahexaenoate + 1-hexadecanoyl-sn-glycero-3-phosphocholine + H(+). Functionally, secretory calcium-dependent phospholipase A2 that primarily targets extracellular phospholipids with implications in host antimicrobial defense, inflammatory response and tissue regeneration. Hydrolyzes the ester bond of the fatty acyl group attached at sn-2 position of phospholipids (phospholipase A2 activity) with preference for phosphatidylethanolamines and phosphatidylglycerols over phosphatidylcholines. Contributes to lipid remodeling of cellular membranes and generation of lipid mediators involved in pathogen clearance. Displays bactericidal activity against Gram-positive bacteria by directly hydrolyzing phospholipids of the bacterial membrane. Upon sterile inflammation, targets membrane phospholipids of extracellular mitochondria released from activated platelets, generating free unsaturated fatty acids such as arachidonate that is used by neighboring leukocytes to synthesize inflammatory eicosanoids such as leukotrienes. Simultaneously, by compromising mitochondrial membrane integrity, promotes the release in circulation of potent damage-associated molecular pattern molecules that activate the innate immune response. Plays a stem cell regulator role in the intestinal crypt. Within intracellular compartment mediates Paneth cell differentiation and its stem cell supporting functions by inhibiting Wnt signaling pathway in intestinal stem cell (ICS). Secreted in the intestinal lumen upon inflammation, acts in an autocrine way and promotes prostaglandin E2 synthesis that stimulates Wnt signaling pathway in ICS cells and tissue regeneration. May play a role in the biosynthesis of N-acyl ethanolamines that regulate energy metabolism and inflammation. Hydrolyzes N-acyl phosphatidylethanolamines to N-acyl lysophosphatidylethanolamines, which are further cleaved by a lysophospholipase D to release N-acyl ethanolamines. Independent of its catalytic activity, acts as a ligand for integrins. Binds to and activates integrins ITGAV:ITGB3, ITGA4:ITGB1 and ITGA5:ITGB1. Binds to a site (site 2) which is distinct from the classical ligand-binding site (site 1) and induces integrin conformational changes and enhanced ligand binding to site 1. Induces cell proliferation in an integrin-dependent manner. This is Phospholipase A2, membrane associated (PLA2G2A) from Cavia porcellus (Guinea pig).